The following is a 511-amino-acid chain: DnaJ homolog 1, mitochondrial (511 aa).

Residues 1–55 (MAFQQGVLSRCSGVFRHHVGHSRHINNILYRHAIAFASIAPRIPKSSFHTSAIRN) constitute a mitochondrion transit peptide. One can recognise a J domain in the interval 59–127 (FKDPYDTLGL…RQQYDQFGPA (69 aa)). The CR-type zinc-finger motif lies at 217 to 297 (SKNVQLRFSA…CHGEGVQVNR (81 aa)). 4 CXXCXGXG motif repeats span residues 230–237 (CSTCSGTG), 247–254 (CSTCHGTG), 269–276 (CPTCNGEG), and 285–292 (CTKCHGEG).

It is found in the mitochondrion. In terms of biological role, plays a role in mitochondrial biogenesis and protein folding. This is DnaJ homolog 1, mitochondrial (MDJ1) from Saccharomyces cerevisiae (strain ATCC 204508 / S288c) (Baker's yeast).